A 276-amino-acid chain; its full sequence is Diaminopimelate epimerase (276 aa).

Residues asparagine 13, glutamine 46, and asparagine 66 each coordinate substrate. The active-site Proton donor is the cysteine 75. Substrate contacts are provided by residues 76–77, asparagine 159, asparagine 192, and 210–211; these read GN and ER. Residue cysteine 219 is the Proton acceptor of the active site. Residue 220 to 221 coordinates substrate; sequence GS.

The protein belongs to the diaminopimelate epimerase family. As to quaternary structure, homodimer.

Its subcellular location is the cytoplasm. It catalyses the reaction (2S,6S)-2,6-diaminopimelate = meso-2,6-diaminopimelate. Its pathway is amino-acid biosynthesis; L-lysine biosynthesis via DAP pathway; DL-2,6-diaminopimelate from LL-2,6-diaminopimelate: step 1/1. Its function is as follows. Catalyzes the stereoinversion of LL-2,6-diaminopimelate (L,L-DAP) to meso-diaminopimelate (meso-DAP), a precursor of L-lysine and an essential component of the bacterial peptidoglycan. This is Diaminopimelate epimerase from Vibrio atlanticus (strain LGP32) (Vibrio splendidus (strain Mel32)).